A 320-amino-acid polypeptide reads, in one-letter code: Malate dehydrogenase (320 aa).

NAD(+) contacts are provided by residues 10-15 (GSGMIG) and aspartate 34. Residues arginine 83 and arginine 89 each coordinate substrate. NAD(+) contacts are provided by residues asparagine 96 and 119-121 (ITN). Substrate is bound by residues asparagine 121 and arginine 152. Histidine 176 serves as the catalytic Proton acceptor.

It belongs to the LDH/MDH superfamily. MDH type 3 family.

The enzyme catalyses (S)-malate + NAD(+) = oxaloacetate + NADH + H(+). Catalyzes the reversible oxidation of malate to oxaloacetate. This is Malate dehydrogenase from Brucella suis (strain ATCC 23445 / NCTC 10510).